The following is an 86-amino-acid chain: U-myrmeciitoxin(01)-Mg1a (86 aa).

Residues 1 to 26 (MKLLYLLLTLAIIFVLTIVHAPNVEA) form the signal peptide. Residues 27 to 52 (KALADPESDAVGFADAFGDADAEATG) constitute a propeptide that is removed on maturation. Residue Leu-85 is modified to Leucine amide.

Belongs to the formicidae venom precursor-01 superfamily. Expressed by the venom gland. This toxin is detected along the entire venom gland, as well as in the venom reservoir, the venom duct and in the venom. No toxin are detected in the Dufour's gland.

Its subcellular location is the secreted. It is found in the target cell membrane. Its function is as follows. Toxin that may interact with target cell membranes, producing a concentration-dependent leak in ion conductance, possibly via multimeric pore formation. It produces an immediate sharp increase of calcium concentration in all DRG neurons. This influx in calcium stabilizes without resulting in any observable dye leakage, showing that the effect is not simply cytolytic. This toxin may be one of the major contributors to the pain associated with envenomation. The toxin also displays a weak cytotoxicity (on HEK cells) and some antimicrobial activity (MIC=2.5 uM on C.neoformans (var. grubii), MIC=10.2 uM on S.aureus), but is not hemolytic to human erythtrocytes. In vivo, intraplantar injection into mice causes spontaneous nocifensive behavior (licking, flinching, or shaking of the paw), which lasts 5-7 minutes (10 and 100 uM tested). Mechanical and heat hypoalgesia are observed at 20 and 25 minutes after injection (highest dose tested of 100 uM). In vivo, injection into crickets (A.domesticus) causes an immediate, dose-dependent, reversible and nonlethal incapacitation that lasts about 53 minutes at the highest dose tested (60 ug/g). The protein is U-myrmeciitoxin(01)-Mg1a of Myrmecia gulosa (Red bulldog ant).